Consider the following 415-residue polypeptide: MQLTAVGLNHQTAPLSIREKLAFAAACLPEAVRNLARSNAATEAVILSTCNRTELYCVGDSEEIIRWLADYHSLPIEEISPYLYTLGMQETVRHAFRVACGLDSMVLGEPQILGQIKDAVRVAQEQESMGKKLNALFQKTFSVAKEIRTDTAVGENSVSMASASVKLAEQIFPDIGDLNVLFIGAGEMIELVATYFAAKSPRLMTVANRTLARAQELCDKLGVNAEPCLLSDLPAILHEYDVVVSSTASQLPIVGKGMVERALKQRQSMPLFMLDLAVPRDIEAEVGDLNDAYLYTVDDMVNIVQSGKEARQKAAAAAETLVSEKVAEFVRQQQGRQSVPLIRALRDEGEKARKQVLENAMKQLAKGATAEEVLERLSIQLTNKLLHSPTQTLNKAGEEDKDLVHAVAQIYHLDK.

Substrate is bound by residues 49–52 (TCNR), S104, 109–111 (EPQ), and Q115. Residue C50 is the Nucleophile of the active site. Residue 184–189 (GAGEMI) coordinates NADP(+).

Belongs to the glutamyl-tRNA reductase family. As to quaternary structure, homodimer.

It catalyses the reaction (S)-4-amino-5-oxopentanoate + tRNA(Glu) + NADP(+) = L-glutamyl-tRNA(Glu) + NADPH + H(+). It participates in porphyrin-containing compound metabolism; protoporphyrin-IX biosynthesis; 5-aminolevulinate from L-glutamyl-tRNA(Glu): step 1/2. Catalyzes the NADPH-dependent reduction of glutamyl-tRNA(Glu) to glutamate 1-semialdehyde (GSA). This chain is Glutamyl-tRNA reductase, found in Neisseria meningitidis serogroup C (strain 053442).